Here is a 611-residue protein sequence, read N- to C-terminus: Threonine--tRNA ligase (611 aa).

The segment at M1–K27 is disordered. Low complexity predominate over residues P8–V24. Residues D209–P502 form a catalytic region. Residues C302, H353, and H479 each coordinate Zn(2+).

Belongs to the class-II aminoacyl-tRNA synthetase family. Homodimer. It depends on Zn(2+) as a cofactor.

It localises to the cytoplasm. The enzyme catalyses tRNA(Thr) + L-threonine + ATP = L-threonyl-tRNA(Thr) + AMP + diphosphate + H(+). Catalyzes the attachment of threonine to tRNA(Thr) in a two-step reaction: L-threonine is first activated by ATP to form Thr-AMP and then transferred to the acceptor end of tRNA(Thr). Also edits incorrectly charged L-seryl-tRNA(Thr). The polypeptide is Threonine--tRNA ligase (Synechococcus sp. (strain CC9605)).